Consider the following 307-residue polypeptide: Ubiquitin recognition factor in ER-associated degradation protein 1 (307 aa).

An N-acetylmethionine modification is found at M1. Phosphoserine occurs at positions 129, 231, 245, 247, and 299. Disordered stretches follow at residues 230–255 (GSGN…GDIK) and 288–307 (GRFI…GRKP).

Belongs to the UFD1 family. As to quaternary structure, heterodimer with NPLOC4, this heterodimer binds VCP and inhibits Golgi membrane fusion. Interacts with USP13. Interacts with ZFAND2B; probably through VCP.

Its subcellular location is the nucleus. It is found in the cytoplasm. It localises to the cytosol. It functions in the pathway protein degradation; proteasomal ubiquitin-dependent pathway. Essential component of the ubiquitin-dependent proteolytic pathway which degrades ubiquitin fusion proteins. The ternary complex containing UFD1, VCP and NPLOC4 binds ubiquitinated proteins and is necessary for the export of misfolded proteins from the ER to the cytoplasm, where they are degraded by the proteasome. The NPLOC4-UFD1-VCP complex regulates spindle disassembly at the end of mitosis and is necessary for the formation of a closed nuclear envelope. It may be involved in the development of some ectoderm-derived structures. Acts as a negative regulator of type I interferon production via the complex formed with VCP and NPLOC4, which binds to RIGI and recruits RNF125 to promote ubiquitination and degradation of RIGI. The protein is Ubiquitin recognition factor in ER-associated degradation protein 1 of Mus musculus (Mouse).